We begin with the raw amino-acid sequence, 199 residues long: MEISMDLIKKLREMTGAGILDCKKALEEAGGDMEKAVEILRKKGAATAEKKAGRTTKEGIIVAYVHFNGRIGVLLEMNCETDFVARTDEFKELAYNLAKQVAAMKPLYVRREDVPAEVIEKEKEIYRAQIKDKPENIVEKIVEGKLEKYFEQVCLYEQTYIFDDTKKVKDLINELIAKTGENIRVSRFTRYEIGEGYED.

The involved in Mg(2+) ion dislocation from EF-Tu stretch occupies residues 81-84 (TDFV).

This sequence belongs to the EF-Ts family.

Its subcellular location is the cytoplasm. Functionally, associates with the EF-Tu.GDP complex and induces the exchange of GDP to GTP. It remains bound to the aminoacyl-tRNA.EF-Tu.GTP complex up to the GTP hydrolysis stage on the ribosome. The chain is Elongation factor Ts from Thermotoga petrophila (strain ATCC BAA-488 / DSM 13995 / JCM 10881 / RKU-1).